Reading from the N-terminus, the 277-residue chain is Phosphoenolpyruvate synthase regulatory protein (277 aa).

ADP is bound at residue 157–164 (GVSRCGKT).

The protein belongs to the pyruvate, phosphate/water dikinase regulatory protein family. PSRP subfamily.

It carries out the reaction [pyruvate, water dikinase] + ADP = [pyruvate, water dikinase]-phosphate + AMP + H(+). It catalyses the reaction [pyruvate, water dikinase]-phosphate + phosphate + H(+) = [pyruvate, water dikinase] + diphosphate. In terms of biological role, bifunctional serine/threonine kinase and phosphorylase involved in the regulation of the phosphoenolpyruvate synthase (PEPS) by catalyzing its phosphorylation/dephosphorylation. The sequence is that of Phosphoenolpyruvate synthase regulatory protein from Salmonella agona (strain SL483).